Here is a 430-residue protein sequence, read N- to C-terminus: UDP-N-acetylglucosamine 1-carboxyvinyltransferase (430 aa).

22–23 (KN) lines the phosphoenolpyruvate pocket. Residue Arg102 participates in UDP-N-acetyl-alpha-D-glucosamine binding. Residue Cys126 is the Proton donor of the active site. Cys126 carries the 2-(S-cysteinyl)pyruvic acid O-phosphothioketal modification. Residues 131–135 (RPVDL), 172–175 (KVSV), Asp317, and Ile339 each bind UDP-N-acetyl-alpha-D-glucosamine.

This sequence belongs to the EPSP synthase family. MurA subfamily.

Its subcellular location is the cytoplasm. It carries out the reaction phosphoenolpyruvate + UDP-N-acetyl-alpha-D-glucosamine = UDP-N-acetyl-3-O-(1-carboxyvinyl)-alpha-D-glucosamine + phosphate. It functions in the pathway cell wall biogenesis; peptidoglycan biosynthesis. In terms of biological role, cell wall formation. Adds enolpyruvyl to UDP-N-acetylglucosamine. This is UDP-N-acetylglucosamine 1-carboxyvinyltransferase from Sinorhizobium fredii (strain NBRC 101917 / NGR234).